The following is a 707-amino-acid chain: D-(-)-3-hydroxybutyrate oligomer hydrolase (707 aa).

An N-terminal signal peptide occupies residues 1–24 (MHHDNFRRLGNAAFAAAAALLAVA). The active-site Charge relay system is serine 311.

It belongs to the D-(-)-3-hydroxybutyrate oligomer hydrolase family.

It is found in the secreted. It catalyses the reaction (3R)-hydroxybutanoate dimer + H2O = 2 (R)-3-hydroxybutanoate + H(+). Its pathway is lipid metabolism; butanoate metabolism. In terms of biological role, participates in the degradation of poly-3-hydroxybutyrate (PHB). It works downstream of poly(3-hydroxybutyrate) depolymerase, hydrolyzing D(-)-3-hydroxybutyrate oligomers of various length (3HB-oligomers) into 3HB-monomers. This chain is D-(-)-3-hydroxybutyrate oligomer hydrolase, found in Cupriavidus pinatubonensis (strain JMP 134 / LMG 1197) (Cupriavidus necator (strain JMP 134)).